The primary structure comprises 152 residues: UPF0756 membrane protein PEPE_1090 (152 aa).

The next 4 membrane-spanning stretches (helical) occupy residues 4–24, 52–72, 85–105, and 115–135; these read WLFL…SLII, WGVT…KIGF, WIAV…VGFL, and LVMG…GPII.

It belongs to the UPF0756 family.

It is found in the cell membrane. This is UPF0756 membrane protein PEPE_1090 from Pediococcus pentosaceus (strain ATCC 25745 / CCUG 21536 / LMG 10740 / 183-1w).